Reading from the N-terminus, the 404-residue chain is Zinc finger protein zfs1 (404 aa).

Residues 134-149 show a composition bias toward polar residues; it reads SYLHSGSSPHGNTSNH. Disordered regions lie at residues 134-168 and 259-322; these read SYLH…TGSG and SNAS…APNG. Positions 150 to 168 are enriched in low complexity; that stretch reads PSPISSLESLPSRSSTGSG. The segment covering 259–283 has biased composition (polar residues); that stretch reads SNASIRNAPSNLSKQFSPSGNSPLT. The segment covering 304 to 317 has biased composition (low complexity); sequence GSASHPHGSGSSNG. 2 C3H1-type zinc fingers span residues 326-354 and 364-392; these read LYKT…HGNQ and KYKS…HDES.

In terms of assembly, interacts with moc3.

The protein localises to the cytoplasm. It is found in the nucleus. In terms of biological role, binds to specific AU-rich elements (ARE) in the 3'-untranslated region of target mRNAs and promotes their degradation. Binds to ARE present in the arz1 mRNA and stimulates the rate of arz1 mRNA decay. Required for coordination of septum formation with exit from mitosis. Involved in the mating response pathway. Induces sexual development and ascus formation. The polypeptide is Zinc finger protein zfs1 (zfs1) (Schizosaccharomyces pombe (strain 972 / ATCC 24843) (Fission yeast)).